The primary structure comprises 79 residues: Small ribosomal subunit protein bS21A (79 aa).

Residues 57–79 (LARKKLQREGLLPAPKKVLRPTR) form a disordered region.

It belongs to the bacterial ribosomal protein bS21 family.

This is Small ribosomal subunit protein bS21A from Rhizobium johnstonii (strain DSM 114642 / LMG 32736 / 3841) (Rhizobium leguminosarum bv. viciae).